We begin with the raw amino-acid sequence, 191 residues long: MRKIGYIRVSSTNQNPSRQFQQLNEIGMDIIYEEKVSGATKDREQLQKVLDDLQEDDIIYVTDLTRITRSTQDLFELIDNIRDKKASLKSLKDTWLDLSEDNPYSQFLITVMAGVNQLERDLIRMRQREGIELAKKEGKFKGRLKKYHKNHAGMNYAVKLYKEGNMTVNQICEITNVSRASLYRKLSEVNN.

The Resolvase/invertase-type recombinase catalytic domain occupies 2-138 (RKIGYIRVSS…EGIELAKKEG (137 aa)). Serine 10 functions as the O-(5'-phospho-DNA)-serine intermediate in the catalytic mechanism. The H-T-H motif DNA-binding region spans 168–187 (VNQICEITNVSRASLYRKLS).

Belongs to the site-specific recombinase resolvase family.

Resolvase catalyzes the resolution (a site-specific recombination) of the cointegrated replicon to yield the final transposition products. The chain is Transposon Tn1546 resolvase from Enterococcus faecium (Streptococcus faecium).